Consider the following 132-residue polypeptide: Interleukin-13 (132 aa).

A signal peptide spans 1–18 (MALLLTTVIALTCLGGFA). Residues asparagine 38, asparagine 49, asparagine 57, and asparagine 72 are each glycosylated (N-linked (GlcNAc...) asparagine). Disulfide bonds link cysteine 48-cysteine 76 and cysteine 64-cysteine 90.

It belongs to the IL-4/IL-13 family. Interacts with IL13RA2.

Its subcellular location is the secreted. Its function is as follows. Cytokine that plays important roles in allergic inflammation and immune response to parasite infection. Synergizes with IL2 in regulating interferon-gamma synthesis. Stimulates B-cell proliferation, and activation of eosinophils, basophils, and mast cells. Plays an important role in controlling IL33 activity by modulating the production of transmembrane and soluble forms of interleukin-1 receptor-like 1/IL1RL1. Displays the capacity to antagonize Th1-driven proinflammatory immune response and downregulates synthesis of many proinflammatory cytokines including IL1, IL6, IL10, IL12 and TNF-alpha through a mechanism that partially involves suppression of NF-kappa-B. Also functions on nonhematopoietic cells, including endothelial cells where it induces vascular cell adhesion protein 1/VCAM1, which is important in the recruitment of eosinophils. Exerts its biological effects through its receptors which comprises the IL4R chain and the IL13RA1 chain, to activate JAK1 and TYK2, leading to the activation of STAT6. Aside from IL13RA1, another receptor IL13RA2 acts as a high affinity decoy for IL13 and mediates internalization and depletion of extracellular IL13. This is Interleukin-13 (IL13) from Pan troglodytes (Chimpanzee).